A 138-amino-acid polypeptide reads, in one-letter code: Putative pre-16S rRNA nuclease (138 aa).

It belongs to the YqgF nuclease family.

Its subcellular location is the cytoplasm. In terms of biological role, could be a nuclease involved in processing of the 5'-end of pre-16S rRNA. In Polaromonas sp. (strain JS666 / ATCC BAA-500), this protein is Putative pre-16S rRNA nuclease.